The chain runs to 333 residues: Type II restriction enzyme XcyI (333 aa).

It belongs to the XcyI type II restriction endonuclease family. As to quaternary structure, monomer. The cofactor is Mg(2+).

The catalysed reaction is Endonucleolytic cleavage of DNA to give specific double-stranded fragments with terminal 5'-phosphates.. Functionally, a P subtype restriction enzyme that recognizes the double-stranded sequence 5'-CCCGGG-3' and cleaves after C-1. The polypeptide is Type II restriction enzyme XcyI (xcyIR) (Xanthomonas campestris pv. cyanopsidis).